The chain runs to 408 residues: Tryptophan synthase beta chain (408 aa).

K97 carries the N6-(pyridoxal phosphate)lysine modification.

Belongs to the TrpB family. In terms of assembly, tetramer of two alpha and two beta chains. Pyridoxal 5'-phosphate serves as cofactor.

The catalysed reaction is (1S,2R)-1-C-(indol-3-yl)glycerol 3-phosphate + L-serine = D-glyceraldehyde 3-phosphate + L-tryptophan + H2O. It functions in the pathway amino-acid biosynthesis; L-tryptophan biosynthesis; L-tryptophan from chorismate: step 5/5. Functionally, the beta subunit is responsible for the synthesis of L-tryptophan from indole and L-serine. The polypeptide is Tryptophan synthase beta chain (trpB) (Pseudomonas syringae pv. syringae).